Here is an 86-residue protein sequence, read N- to C-terminus: Small ribosomal subunit protein bS20 (86 aa).

Residues M1–K25 are disordered.

The protein belongs to the bacterial ribosomal protein bS20 family.

Binds directly to 16S ribosomal RNA. In Nocardia farcinica (strain IFM 10152), this protein is Small ribosomal subunit protein bS20.